The chain runs to 407 residues: Peptidase T (407 aa).

His81 is a binding site for Zn(2+). The active site involves Asp83. Position 142 (Asp142) interacts with Zn(2+). Glu176 functions as the Proton acceptor in the catalytic mechanism. Positions 177, 199, and 381 each coordinate Zn(2+).

It belongs to the peptidase M20B family. It depends on Zn(2+) as a cofactor.

Its subcellular location is the cytoplasm. It catalyses the reaction Release of the N-terminal residue from a tripeptide.. Cleaves the N-terminal amino acid of tripeptides. This chain is Peptidase T, found in Streptococcus pneumoniae (strain ATCC 700669 / Spain 23F-1).